A 346-amino-acid polypeptide reads, in one-letter code: Ribosomal RNA small subunit methyltransferase H (346 aa).

S-adenosyl-L-methionine is bound by residues 47 to 49 (GGY), Asp-65, Phe-92, Asp-113, and Gln-120. Positions 294 to 346 (AVEPGSDEVAGNPRARSAKLRAAERTDAPAHPDGDLAGLLPADLSQRRGRRRS) are disordered. The span at 314–327 (RAAERTDAPAHPDG) shows a compositional bias: basic and acidic residues. The segment covering 328-337 (DLAGLLPADL) has biased composition (low complexity).

The protein belongs to the methyltransferase superfamily. RsmH family.

It localises to the cytoplasm. It carries out the reaction cytidine(1402) in 16S rRNA + S-adenosyl-L-methionine = N(4)-methylcytidine(1402) in 16S rRNA + S-adenosyl-L-homocysteine + H(+). In terms of biological role, specifically methylates the N4 position of cytidine in position 1402 (C1402) of 16S rRNA. This chain is Ribosomal RNA small subunit methyltransferase H, found in Azorhizobium caulinodans (strain ATCC 43989 / DSM 5975 / JCM 20966 / LMG 6465 / NBRC 14845 / NCIMB 13405 / ORS 571).